We begin with the raw amino-acid sequence, 422 residues long: Zinc finger and BTB domain-containing protein 42 (422 aa).

Residues 24–92 (CDCTVLVGDA…MYEGRLDLRS (69 aa)) form the BTB domain. 3 disordered regions span residues 121–141 (KDRS…QPPC), 166–188 (AALP…DQAL), and 207–256 (LQTP…AAKG). Over residues 243–252 (HSPPKPPPVP) the composition is skewed to pro residues. C2H2-type zinc fingers lie at residues 294 to 316 (CICP…LSAH), 334 to 356 (PTCP…ERTH), 362 to 384 (YTCV…TVVH), and 390 to 413 (HACR…RKFH).

This sequence belongs to the krueppel C2H2-type zinc-finger protein family. ZBTB18 subfamily. Expressed in skeletal muscle (at protein level).

The protein resides in the cytoplasm. It is found in the nucleus. It localises to the nucleoplasm. In terms of biological role, transcriptional repressor. Specifically binds DNA and probably acts by recruiting chromatin remodeling multiprotein complexes. The polypeptide is Zinc finger and BTB domain-containing protein 42 (ZBTB42) (Homo sapiens (Human)).